The chain runs to 126 residues: Holo-[acyl-carrier-protein] synthase (126 aa).

Residues D9 and E58 each coordinate Mg(2+).

It belongs to the P-Pant transferase superfamily. AcpS family. Requires Mg(2+) as cofactor.

The protein resides in the cytoplasm. It carries out the reaction apo-[ACP] + CoA = holo-[ACP] + adenosine 3',5'-bisphosphate + H(+). Its function is as follows. Transfers the 4'-phosphopantetheine moiety from coenzyme A to a Ser of acyl-carrier-protein. This is Holo-[acyl-carrier-protein] synthase from Aliivibrio fischeri (strain MJ11) (Vibrio fischeri).